The chain runs to 544 residues: Pyruvate kinase (544 aa).

R31 contacts substrate. K(+)-binding residues include N33 and D61. Residue 33 to 36 (NSAH) participates in ATP binding. R68 is an ATP binding site. E204 provides a ligand contact to Mg(2+). 3 residues coordinate substrate: G227, D228, and T260. D228 is a Mg(2+) binding site.

It belongs to the pyruvate kinase family. Homotetramer. Requires Mg(2+) as cofactor. K(+) is required as a cofactor.

It catalyses the reaction pyruvate + ATP = phosphoenolpyruvate + ADP + H(+). Its pathway is carbohydrate degradation; glycolysis; pyruvate from D-glyceraldehyde 3-phosphate: step 5/5. The protein is Pyruvate kinase of Thermoplasma acidophilum (strain ATCC 25905 / DSM 1728 / JCM 9062 / NBRC 15155 / AMRC-C165).